A 147-amino-acid chain; its full sequence is Large ribosomal subunit protein uL15 (147 aa).

A disordered region spans residues 1 to 62 (MKLHELKPAQ…GQQPLSRRMP (62 aa)). Composition is skewed to gly residues over residues 21 to 31 (RGIGSGTGKTS) and 42 to 52 (AGGGVRPGFEG).

The protein belongs to the universal ribosomal protein uL15 family. In terms of assembly, part of the 50S ribosomal subunit.

Its function is as follows. Binds to the 23S rRNA. The polypeptide is Large ribosomal subunit protein uL15 (Desulfitobacterium hafniense (strain DSM 10664 / DCB-2)).